Here is an 823-residue protein sequence, read N- to C-terminus: Leucine--tRNA ligase (823 aa).

Positions 42–52 match the 'HIGH' region motif; sequence PYPSGTLHMGH. Positions 575–579 match the 'KMSKS' region motif; the sequence is KMSKS. Lysine 578 contacts ATP.

It belongs to the class-I aminoacyl-tRNA synthetase family.

It is found in the cytoplasm. The enzyme catalyses tRNA(Leu) + L-leucine + ATP = L-leucyl-tRNA(Leu) + AMP + diphosphate. This is Leucine--tRNA ligase from Legionella pneumophila (strain Corby).